Here is a 123-residue protein sequence, read N- to C-terminus: Small ribosomal subunit protein uS12c (123 aa).

The protein belongs to the universal ribosomal protein uS12 family. In terms of assembly, part of the 30S ribosomal subunit.

It is found in the plastid. The protein localises to the chloroplast. In terms of biological role, with S4 and S5 plays an important role in translational accuracy. Located at the interface of the 30S and 50S subunits. The sequence is that of Small ribosomal subunit protein uS12c (rps12) from Marchantia polymorpha (Common liverwort).